A 25-amino-acid chain; its full sequence is Ocellatin-1 (25 aa).

Residue Val25 is modified to Valine amide.

As to expression, expressed by the skin dorsal glands.

Its subcellular location is the secreted. Its function is as follows. Has hemolytic activity against human erythrocytes and antibacterial activity against the Gram-negative bacterium E.coli. This chain is Ocellatin-1, found in Leptodactylus ocellatus (Argus frog).